The primary structure comprises 332 residues: DNA-directed RNA polymerase subunit alpha (332 aa).

Positions 1–234 are alpha N-terminal domain (alpha-NTD); the sequence is MTVTANQVLR…DQLSVFGDFT (234 aa). The alpha C-terminal domain (alpha-CTD) stretch occupies residues 248–332; that stretch reads VDPVLLRPID…AGVASHGMLG (85 aa).

This sequence belongs to the RNA polymerase alpha chain family. In terms of assembly, homodimer. The RNAP catalytic core consists of 2 alpha, 1 beta, 1 beta' and 1 omega subunit. When a sigma factor is associated with the core the holoenzyme is formed, which can initiate transcription.

The enzyme catalyses RNA(n) + a ribonucleoside 5'-triphosphate = RNA(n+1) + diphosphate. Its function is as follows. DNA-dependent RNA polymerase catalyzes the transcription of DNA into RNA using the four ribonucleoside triphosphates as substrates. This Stenotrophomonas maltophilia (strain K279a) protein is DNA-directed RNA polymerase subunit alpha.